Consider the following 87-residue polypeptide: Small ribosomal subunit protein bS21 (87 aa).

The segment covering 35–52 (HYEKPSEKKAREKAEAVR) has biased composition (basic and acidic residues). Residues 35–87 (HYEKPSEKKAREKAEAVRRARKLARKKLQREGLLPSKPKPAFGADRRPSAAAR) form a disordered region. Over residues 53 to 62 (RARKLARKKL) the composition is skewed to basic residues. Over residues 78 to 87 (ADRRPSAAAR) the composition is skewed to basic and acidic residues.

This chain is Small ribosomal subunit protein bS21, found in Rhodopseudomonas palustris (strain ATCC BAA-98 / CGA009).